A 563-amino-acid polypeptide reads, in one-letter code: Arginine--tRNA ligase (563 aa).

A 'HIGH' region motif is present at residues 121-131 (PNIAKPFSIGH).

Belongs to the class-I aminoacyl-tRNA synthetase family. As to quaternary structure, monomer.

The protein localises to the cytoplasm. It catalyses the reaction tRNA(Arg) + L-arginine + ATP = L-arginyl-tRNA(Arg) + AMP + diphosphate. This chain is Arginine--tRNA ligase, found in Streptococcus pneumoniae (strain Taiwan19F-14).